The following is a 124-amino-acid chain: Large ribosomal subunit protein uL22 (124 aa).

The protein belongs to the universal ribosomal protein uL22 family. In terms of assembly, part of the 50S ribosomal subunit.

This protein binds specifically to 23S rRNA; its binding is stimulated by other ribosomal proteins, e.g. L4, L17, and L20. It is important during the early stages of 50S assembly. It makes multiple contacts with different domains of the 23S rRNA in the assembled 50S subunit and ribosome. In terms of biological role, the globular domain of the protein is located near the polypeptide exit tunnel on the outside of the subunit, while an extended beta-hairpin is found that lines the wall of the exit tunnel in the center of the 70S ribosome. This chain is Large ribosomal subunit protein uL22, found in Buchnera aphidicola subsp. Cinara cedri (strain Cc).